The primary structure comprises 81 residues: Photosystem I iron-sulfur center (81 aa).

4Fe-4S ferredoxin-type domains lie at S2 to W31 and G37 to Y68. Residues C11, C14, C17, C21, C48, C51, C54, and C58 each coordinate [4Fe-4S] cluster.

As to quaternary structure, the cyanobacterial PSI reaction center is composed of one copy each of PsaA,B,C,D,E,F,I,J,K,L,M and X, and forms trimeric complexes. Requires [4Fe-4S] cluster as cofactor.

Its subcellular location is the cellular thylakoid membrane. It carries out the reaction reduced [plastocyanin] + hnu + oxidized [2Fe-2S]-[ferredoxin] = oxidized [plastocyanin] + reduced [2Fe-2S]-[ferredoxin]. Functionally, apoprotein for the two 4Fe-4S centers FA and FB of photosystem I (PSI); essential for photochemical activity. FB is the terminal electron acceptor of PSI, donating electrons to ferredoxin. The C-terminus interacts with PsaA/B/D and helps assemble the protein into the PSI complex. Required for binding of PsaD and PsaE to PSI. PSI is a plastocyanin/cytochrome c6-ferredoxin oxidoreductase, converting photonic excitation into a charge separation, which transfers an electron from the donor P700 chlorophyll pair to the spectroscopically characterized acceptors A0, A1, FX, FA and FB in turn. In Synechococcus sp. (strain RCC307), this protein is Photosystem I iron-sulfur center.